The chain runs to 229 residues: 7-cyano-7-deazaguanine synthase (229 aa).

8-18 is a binding site for ATP; that stretch reads FSGGQDSTTCL. The Zn(2+) site is built by C187, C196, C199, and C202.

Belongs to the QueC family. The cofactor is Zn(2+).

The catalysed reaction is 7-carboxy-7-deazaguanine + NH4(+) + ATP = 7-cyano-7-deazaguanine + ADP + phosphate + H2O + H(+). The protein operates within purine metabolism; 7-cyano-7-deazaguanine biosynthesis. In terms of biological role, catalyzes the ATP-dependent conversion of 7-carboxy-7-deazaguanine (CDG) to 7-cyano-7-deazaguanine (preQ(0)). The polypeptide is 7-cyano-7-deazaguanine synthase (Shewanella halifaxensis (strain HAW-EB4)).